We begin with the raw amino-acid sequence, 259 residues long: Small ribosomal subunit protein uS2 (259 aa).

Positions 224 to 259 (GKQGEDDQQVAPAEDVAEEVSDESLQDLKNSVEGND) are disordered. Residues 238-248 (DVAEEVSDESL) show a composition bias toward acidic residues. Residues 250–259 (DLKNSVEGND) are compositionally biased toward polar residues.

Belongs to the universal ribosomal protein uS2 family.

The polypeptide is Small ribosomal subunit protein uS2 (Limosilactobacillus fermentum (strain NBRC 3956 / LMG 18251) (Lactobacillus fermentum)).